An 81-amino-acid chain; its full sequence is Cytotoxin 1d/1e (81 aa).

Positions 1–21 (MKTLLLTLVVVTIVCLDLGYT) are cleaved as a signal peptide. 4 cysteine pairs are disulfide-bonded: C24–C42, C35–C59, C63–C74, and C75–C80.

Belongs to the three-finger toxin family. Short-chain subfamily. Type IA cytotoxin sub-subfamily. Monomer in solution; Homodimer and oligomer in the presence of negatively charged lipids forming a pore with a size ranging between 20 and 30 Angstroms. Expressed by the venom gland.

The protein resides in the secreted. Its subcellular location is the target cell membrane. In terms of biological role, shows cytolytic activity on many different cells by forming pore in lipid membranes. In vivo, increases heart rate or kills the animal by cardiac arrest. In addition, it binds to heparin with high affinity, interacts with Kv channel-interacting protein 1 (KCNIP1) in a calcium-independent manner, and binds to integrin alpha-V/beta-3 (ITGAV/ITGB3) with moderate affinity. The protein is Cytotoxin 1d/1e of Naja atra (Chinese cobra).